Consider the following 223-residue polypeptide: Ribosome maturation factor RimM (223 aa).

The PRC barrel domain maps to 142-223 (ADEFYWVDLI…RIVVDWEADY (82 aa)).

This sequence belongs to the RimM family. Binds ribosomal protein uS19.

The protein localises to the cytoplasm. Its function is as follows. An accessory protein needed during the final step in the assembly of 30S ribosomal subunit, possibly for assembly of the head region. Essential for efficient processing of 16S rRNA. May be needed both before and after RbfA during the maturation of 16S rRNA. It has affinity for free ribosomal 30S subunits but not for 70S ribosomes. This chain is Ribosome maturation factor RimM, found in Burkholderia multivorans (strain ATCC 17616 / 249).